The primary structure comprises 938 residues: MLPIKLLIFILGYLLSPTLQQYQQIPPRDYENKNYFLVELNTTNSQKPLIDFISHYRGHYNFEHQLSSLDNHYVFSIDKSHPHNSFLGNHNSNEYNLMKRQLGHEQDYDELISHVESIHLLPMKKLSKRIPVPIEMEDVVFDNRDDTGSDNHEATDEAHQKLIEIAKKLDIHDPEFTTQWHLINLKYPGHDVNVTGLWLENILGQGIVTALVDDGVDAESDDIKQNFNSEGSWDFNNKGKSPLPRLFDDYHGTRCAGEIAAVKNDVCGIGVAWKSQVSGIRILSGPITSSDEAEAMVYGLDTNDIYSCSWGPTDNGKVLSEPDVIVKKAMIKGIQEGRDKKGAIYVFASGNGGRFGDSCNFDGYTNSIYSITVGAIDYKGLHPQYSEACSAVMVVTYSSGSGEHIHTTDIKKKCSATHGGTSAAAPLASGIYSLILSANPNLTWRDVQYISVLSATPINEEDGNYQTTALNRKYSHKYGYGKTDAYKMVHFAKTWVNVKPQAWYYSDIIEVNQTITTTPEQKAPSKRDSPQKIIHSSVNVSEKDLKIMNVERVEHITVKVNIDSTYRGRVGMRIISPTGVISDLATFRVNDASTRGFQNWTFMSVAHWGETGIGEWKVEVFVDDSKGDQVEINFKDWQFRIFGESIDGDKAEVYDITKDYAAIRRELLEKEKQNSKSTTTTSSTTTATTTSGGEGDQKTTTSAENKESTTKVDNSASITTSQTASLTSSNEQHQPTESNSDSDSDTDDENKQEGEEDNDNDNDNGNKKANSDNTGFYLMSIAVVGFIAVLLVMKFHKTPGSGRRRRRRDGYEFDIIPGEDYSDSDDDEDDFDTRRADDDSFDLGHRNDQRVVSASQQQRQYDRQQDETRDRLFDDFNAESLPDYENDMFKIGDEEEEEEEGQQSAKAPSNSEGNSGTSTKKYKDNEADEDHKDVVGTQ.

Residues 1-20 (MLPIKLLIFILGYLLSPTLQ) form the signal peptide. N-linked (GlcNAc...) asparagine glycans are attached at residues Asn41 and Asn193. The Peptidase S8 domain maps to 179-489 (QWHLINLKYP…YGKTDAYKMV (311 aa)). Catalysis depends on charge relay system residues Asp213 and His251. 2 disulfide bridges follow: Cys267/Cys414 and Cys359/Cys389. Residue Ser422 is the Charge relay system of the active site. Asn441, Asn512, Asn539, and Asn599 each carry an N-linked (GlcNAc...) asparagine glycan. The P/Homo B domain occupies 498 to 647 (VKPQAWYYSD…QFRIFGESID (150 aa)). The disordered stretch occupies residues 671–768 (EKQNSKSTTT…DNDNDNGNKK (98 aa)). The span at 677-691 (STTTTSSTTTATTTS) shows a compositional bias: low complexity. The span at 711-735 (KVDNSASITTSQTASLTSSNEQHQP) shows a compositional bias: polar residues. A compositionally biased stretch (acidic residues) spans 740–762 (SDSDSDTDDENKQEGEEDNDNDN). Residues 775 to 795 (GFYLMSIAVVGFIAVLLVMKF) form a helical membrane-spanning segment. The Cytoplasmic segment spans residues 796–924 (HKTPGSGRRR…SGTSTKKYKD (129 aa)). A compositionally biased stretch (basic residues) spans 798 to 808 (TPGSGRRRRRR). Residues 798–938 (TPGSGRRRRR…EDHKDVVGTQ (141 aa)) are disordered. Residues 820–831 (DYSDSDDDEDDF) show a composition bias toward acidic residues. Residues 832–849 (DTRRADDDSFDLGHRNDQ) are compositionally biased toward basic and acidic residues. Positions 850–859 (RVVSASQQQR) are enriched in low complexity. Over residues 860–874 (QYDRQQDETRDRLFD) the composition is skewed to basic and acidic residues. Polar residues predominate over residues 902–919 (QQSAKAPSNSEGNSGTST). Basic and acidic residues predominate over residues 921–938 (KYKDNEADEDHKDVVGTQ).

Belongs to the peptidase S8 family. Furin subfamily. Ca(2+) is required as a cofactor. Post-translationally, O-glycosylated.

The protein localises to the golgi apparatus. The protein resides in the trans-Golgi network membrane. It carries out the reaction Cleavage of -Lys-Arg-|-Xaa- and -Arg-Arg-|-Xaa- bonds to process yeast alpha-factor pheromone and killer toxin precursors.. This is Kexin (KEX2) from Candida albicans (strain WO-1) (Yeast).